A 1365-amino-acid chain; its full sequence is Zinc finger protein 423 (1365 aa).

A compositionally biased stretch (basic residues) spans 1–11 (MSRRKQAKPRS). The interval 1–69 (MSRRKQAKPR…SHDERVGEED (69 aa)) is disordered. Basic and acidic residues predominate over residues 37 to 51 (VSERDSDRKESRAVG). A C2H2-type 1 zinc finger spans residues 76 to 98 (FTCDNCQQDFECLADLTEHRTNH). Residues 99 to 126 (CPADGDDDPGLSWVASSPSSKDVASPSQ) are disordered. Positions 112–126 (VASSPSSKDVASPSQ) are enriched in low complexity. 4 C2H2-type zinc fingers span residues 150–172 (YPCQ…EQIH), 178–200 (FKCT…VKLH), 206–228 (YSCQ…LKTH), and 234–256 (FKCS…MQAH). The disordered stretch occupies residues 250-280 (QSHMQAHRKNKEHLAKKDQGKRDGSSSDVTE). Positions 261 to 274 (EHLAKKDQGKRDGS) are enriched in basic and acidic residues. 3 C2H2-type zinc fingers span residues 286–309 (YMCD…LTQH), 318–341 (LQCI…DRTH), and 346–368 (HKCP…LDSH). Residues 366–429 (DSHRQPDSSN…LAPSSDHDDG (64 aa)) form a disordered region. Positions 386 to 400 (SVASMSSATPDSSAS) are enriched in low complexity. The C2H2-type 9; degenerate zinc finger occupies 437–461 (YSCPYCSKRDFNSLAVLEIHLKTIH). C2H2-type zinc fingers lie at residues 469-492 (HTCQ…RKAH), 513-536 (FHCN…RVSH), and 555-578 (FFCN…QQTH). The C2H2-type 13; atypical zinc finger occupies 603-628 (YSCPYCTNSPIFGSLLKLTKHIKENH). 7 C2H2-type zinc fingers span residues 675–697 (YPCN…LKSH), 705–728 (QSCP…LTIH), 736–759 (YVCE…LDMH), 764–787 (YHCT…AVKH), 794–817 (YRCT…KHSH), 831–853 (RKCI…ITTH), and 857–880 (YNCR…REKH). The segment covering 885–895 (GGNGNGNGGSQ) has biased composition (gly residues). The disordered stretch occupies residues 885–916 (GGNGNGNGGSQNGTPNGVTQSSKRSTAGSTAA). Positions 902 to 913 (VTQSSKRSTAGS) are enriched in polar residues. The segment at 954–976 (YACDICGAAYTMESLLQNHRLRD) adopts a C2H2-type 21; degenerate zinc-finger fold. C2H2-type zinc fingers lie at residues 1000 to 1022 (HKCN…AQTH), 1029 to 1051 (YMCP…KVTH), 1090 to 1112 (FRCV…GTFH), 1201 to 1224 (LRCS…QVDH), 1249 to 1271 (YQCI…VANH), 1279 to 1301 (HECK…LIEH), 1310 to 1333 (FKCP…FAVH), and 1340 to 1363 (YDCS…LSQH).

It belongs to the krueppel C2H2-type zinc-finger protein family.

It localises to the nucleus. Its function is as follows. Transcription factor that can both act as an activator or a repressor depending on the context. Plays a central role in BMP signaling and olfactory neurogenesis. Associates with SMADs in response to bmp2 leading to activate transcription of BMP target genes. Acts as a transcriptional repressor involved in terminal olfactory receptor neurons differentiation. Involved in olfactory neurogenesis by participating in a developmental switch that regulates the transition from differentiation to maturation in olfactory receptor neurons. This Danio rerio (Zebrafish) protein is Zinc finger protein 423 (znf423).